Consider the following 131-residue polypeptide: MAQIPAGADRPGKLSRKQTGDAWELKARRWLEGKGLRFIAANVHGRGGEIDLIMKDGQVIVFIEVRFRQSSRFGGAAASVTLAKQHKLLQTAHLWLARHNGSFDTVDCRFDVVAFTGNDIEWLKNAFGEDA.

The disordered stretch occupies residues 1–20 (MAQIPAGADRPGKLSRKQTG).

The protein belongs to the UPF0102 family.

This Enterobacter sp. (strain 638) protein is UPF0102 protein Ent638_3585.